The primary structure comprises 209 residues: Thiamine-phosphate synthase (209 aa).

Residues 37 to 41 (QLREK) and asparagine 69 each bind 4-amino-2-methyl-5-(diphosphooxymethyl)pyrimidine. Residues aspartate 70 and aspartate 89 each contribute to the Mg(2+) site. Serine 108 is a binding site for 4-amino-2-methyl-5-(diphosphooxymethyl)pyrimidine. Residue 134 to 136 (TNT) coordinates 2-[(2R,5Z)-2-carboxy-4-methylthiazol-5(2H)-ylidene]ethyl phosphate. Lysine 137 contacts 4-amino-2-methyl-5-(diphosphooxymethyl)pyrimidine. 2-[(2R,5Z)-2-carboxy-4-methylthiazol-5(2H)-ylidene]ethyl phosphate is bound by residues glycine 164 and 184-185 (VS).

Belongs to the thiamine-phosphate synthase family. Mg(2+) serves as cofactor.

The enzyme catalyses 2-[(2R,5Z)-2-carboxy-4-methylthiazol-5(2H)-ylidene]ethyl phosphate + 4-amino-2-methyl-5-(diphosphooxymethyl)pyrimidine + 2 H(+) = thiamine phosphate + CO2 + diphosphate. It carries out the reaction 2-(2-carboxy-4-methylthiazol-5-yl)ethyl phosphate + 4-amino-2-methyl-5-(diphosphooxymethyl)pyrimidine + 2 H(+) = thiamine phosphate + CO2 + diphosphate. It catalyses the reaction 4-methyl-5-(2-phosphooxyethyl)-thiazole + 4-amino-2-methyl-5-(diphosphooxymethyl)pyrimidine + H(+) = thiamine phosphate + diphosphate. It participates in cofactor biosynthesis; thiamine diphosphate biosynthesis; thiamine phosphate from 4-amino-2-methyl-5-diphosphomethylpyrimidine and 4-methyl-5-(2-phosphoethyl)-thiazole: step 1/1. Condenses 4-methyl-5-(beta-hydroxyethyl)thiazole monophosphate (THZ-P) and 2-methyl-4-amino-5-hydroxymethyl pyrimidine pyrophosphate (HMP-PP) to form thiamine monophosphate (TMP). This chain is Thiamine-phosphate synthase, found in Methanobrevibacter smithii (strain ATCC 35061 / DSM 861 / OCM 144 / PS).